The primary structure comprises 601 residues: ATP-dependent lipid A-core flippase (601 aa).

An ABC transmembrane type-1 domain is found at 28-328 (LLSVVGLIVY…LTRVNAEFQR (301 aa)). 6 consecutive transmembrane segments (helical) span residues 32–52 (VGLIVYGLVDAAFISFIGPFI), 81–101 (VLLMAPIVVILMFSLRGFANF), 160–180 (ALISIVRDSVTIIGMLGLMFY), 183–203 (WKLSLCILVIGPIMGVVITIV), 267–287 (AVSQPLIMVIGSFALAFVLYA), and 296–316 (DLTAGTFATILGAMMAMLQPI). The 238-residue stretch at 360 to 597 (LRFDNVSFSY…GGMYAKLYQM (238 aa)) folds into the ABC transporter domain. An ATP-binding site is contributed by 394-401 (GRSGSGKS).

This sequence belongs to the ABC transporter superfamily. Lipid exporter (TC 3.A.1.106) family. Homodimer.

It localises to the cell inner membrane. The catalysed reaction is ATP + H2O + lipid A-core oligosaccharideSide 1 = ADP + phosphate + lipid A-core oligosaccharideSide 2.. Involved in lipopolysaccharide (LPS) biosynthesis. Translocates lipid A-core from the inner to the outer leaflet of the inner membrane. Transmembrane domains (TMD) form a pore in the inner membrane and the ATP-binding domain (NBD) is responsible for energy generation. This Shewanella oneidensis (strain ATCC 700550 / JCM 31522 / CIP 106686 / LMG 19005 / NCIMB 14063 / MR-1) protein is ATP-dependent lipid A-core flippase.